A 96-amino-acid chain; its full sequence is UPF0235 protein YPN_3141 (96 aa).

Belongs to the UPF0235 family.

The polypeptide is UPF0235 protein YPN_3141 (Yersinia pestis bv. Antiqua (strain Nepal516)).